A 425-amino-acid chain; its full sequence is 5-hydroxytryptamine receptor 7 (425 aa).

Residues 1–72 (MLIQVQPSHL…LLYGDTEKIV (72 aa)) are Extracellular-facing. 3 N-linked (GlcNAc...) asparagine glycosylation sites follow: Asn-14, Asn-41, and Asn-51. A helical transmembrane segment spans residues 73–97 (IGVVLSIITLFTIAGNALVIISVCI). Over 98–107 (VKKLRQPSNY) the chain is Cytoplasmic. The helical transmembrane segment at 108–129 (LVVSLAAADLSVAVAVMPFVII) threads the bilayer. Residues 130 to 141 (TDLVGGEWLFGK) lie on the Extracellular side of the membrane. Residues 142-167 (VFCNVFIAMDVMCCTASIMTLCVISV) form a helical membrane-spanning segment. The cysteines at positions 144 and 220 are disulfide-linked. Residue Asp-151 coordinates serotonin. Residues 168–187 (DRYLGITRPLTYPARQNGKL) are Cytoplasmic-facing. A helical membrane pass occupies residues 188 to 208 (MAKMVFIVWLLSASITLPPLF). Topologically, residues 209 to 226 (GWAKNVNVERVCLISQDF) are extracellular. Residues 227–249 (GYTVYSTAVAFYIPMTVMLVMYQ) form a helical membrane-spanning segment. Topologically, residues 250-322 (RIFVAAKISA…SIFKREQKAA (73 aa)) are cytoplasmic. A helical transmembrane segment spans residues 323-348 (RTLGIIVGAFTFCWLPFFLLSTARPF). At 349 to 359 (ICGIMCSCMPL) the chain is on the extracellular side. Residues 360 to 383 (RLERTLLWLGYTNSLINPLIYAFF) form a helical membrane-spanning segment. The Cytoplasmic segment spans residues 384–425 (NRDLRTTFWNLLRCKYTNINRRLSAASMHEALKVTERHEGIL). Cys-397 carries S-palmitoyl cysteine lipidation.

The protein belongs to the G-protein coupled receptor 1 family.

Its subcellular location is the cell membrane. Functionally, G-protein coupled receptor for 5-hydroxytryptamine (serotonin), a biogenic hormone that functions as a neurotransmitter, a hormone and a mitogen. Ligand binding causes a conformation change that triggers signaling via guanine nucleotide-binding proteins (G proteins) and modulates the activity of downstream effectors. HTR7 is coupled to G(s) G alpha proteins and mediates activation of adenylate cyclase activity. This chain is 5-hydroxytryptamine receptor 7 (htr7), found in Xenopus laevis (African clawed frog).